We begin with the raw amino-acid sequence, 230 residues long: Proteasome subunit beta 2 (230 aa).

Positions 1 to 10 are enriched in basic and acidic residues; sequence MHDPENRLTD. Residues 1–29 are disordered; sequence MHDPENRLTDAYEPEVGNLPNEDSGRDEE. Residues 1–35 constitute a propeptide, removed in mature form; by autocatalysis; it reads MHDPENRLTDAYEPEVGNLPNEDSGRDEENVVKTG. T36 serves as the catalytic Nucleophile.

It belongs to the peptidase T1B family. As to quaternary structure, the 20S proteasome core is composed of 14 alpha and 14 beta subunits that assemble into four stacked heptameric rings, resulting in a barrel-shaped structure. The two inner rings, each composed of seven catalytic beta subunits, are sandwiched by two outer rings, each composed of seven alpha subunits. The catalytic chamber with the active sites is on the inside of the barrel. Has a gated structure, the ends of the cylinder being occluded by the N-termini of the alpha-subunits. Is capped at one or both ends by the proteasome regulatory ATPase, PAN.

Its subcellular location is the cytoplasm. It carries out the reaction Cleavage of peptide bonds with very broad specificity.. The formation of the proteasomal ATPase PAN-20S proteasome complex, via the docking of the C-termini of PAN into the intersubunit pockets in the alpha-rings, triggers opening of the gate for substrate entry. Interconversion between the open-gate and close-gate conformations leads to a dynamic regulation of the 20S proteasome proteolysis activity. Its function is as follows. Component of the proteasome core, a large protease complex with broad specificity involved in protein degradation. In Haloarcula marismortui (strain ATCC 43049 / DSM 3752 / JCM 8966 / VKM B-1809) (Halobacterium marismortui), this protein is Proteasome subunit beta 2.